We begin with the raw amino-acid sequence, 232 residues long: Phosphoglycolate phosphatase (232 aa).

Aspartate 8 serves as the catalytic Nucleophile. Residues aspartate 8 and aspartate 10 each coordinate Mg(2+). Residue lysine 155 coordinates substrate. Mg(2+) contacts are provided by aspartate 178 and aspartate 182.

The protein belongs to the archaeal SPP-like hydrolase family. Mg(2+) serves as cofactor.

The catalysed reaction is 2-phosphoglycolate + H2O = glycolate + phosphate. In terms of biological role, catalyzes the dephosphorylation of 2-phosphoglycolate. This Methanospirillum hungatei JF-1 (strain ATCC 27890 / DSM 864 / NBRC 100397 / JF-1) protein is Phosphoglycolate phosphatase.